A 506-amino-acid chain; its full sequence is Maturase K (506 aa).

It belongs to the intron maturase 2 family. MatK subfamily.

The protein localises to the plastid. It localises to the chloroplast. In terms of biological role, usually encoded in the trnK tRNA gene intron. Probably assists in splicing its own and other chloroplast group II introns. This chain is Maturase K, found in Manihot esculenta (Cassava).